We begin with the raw amino-acid sequence, 299 residues long: uncharacterized protein (299 aa).

Helical transmembrane passes span 13–33, 36–56, 79–99, 112–132, 151–171, 201–221, 241–261, and 267–287; these read ILFLFSHSFSSFLLPFQLHFM, AFVIGLIAALLAGIVGSFLML, SFGIPLIFGALLASIISVIII, TAIGIVFASFFGLGILLISVI, ITSEDLQNTSIILAIILLFFI, FLILVALTIIVSMKAIGVILV, YVILTSSIIGVSCSFSGMLLS, and PPGPTIVLITSLIFFILFLII.

Belongs to the ABC-3 integral membrane protein family.

It is found in the plastid. Its subcellular location is the cyanelle membrane. This is an uncharacterized protein from Cyanophora paradoxa.